A 272-amino-acid chain; its full sequence is Phosphatidylglycerol--prolipoprotein diacylglyceryl transferase (272 aa).

The next 4 membrane-spanning stretches (helical) occupy residues 24 to 44 (WYAL…RHLV), 64 to 84 (LLVY…VVFY), 99 to 119 (LWQG…GVML), and 125 to 145 (GLPT…GLFL). Arginine 147 contributes to the a 1,2-diacyl-sn-glycero-3-phospho-(1'-sn-glycerol) binding site. 3 helical membrane passes run 185-205 (AAAE…LGAL), 209-229 (GLVT…CEFF), and 245-265 (MGML…AFAY).

It belongs to the Lgt family.

It localises to the cell inner membrane. The catalysed reaction is L-cysteinyl-[prolipoprotein] + a 1,2-diacyl-sn-glycero-3-phospho-(1'-sn-glycerol) = an S-1,2-diacyl-sn-glyceryl-L-cysteinyl-[prolipoprotein] + sn-glycerol 1-phosphate + H(+). It functions in the pathway protein modification; lipoprotein biosynthesis (diacylglyceryl transfer). Its function is as follows. Catalyzes the transfer of the diacylglyceryl group from phosphatidylglycerol to the sulfhydryl group of the N-terminal cysteine of a prolipoprotein, the first step in the formation of mature lipoproteins. The polypeptide is Phosphatidylglycerol--prolipoprotein diacylglyceryl transferase (Methylocella silvestris (strain DSM 15510 / CIP 108128 / LMG 27833 / NCIMB 13906 / BL2)).